A 212-amino-acid polypeptide reads, in one-letter code: Small ribosomal subunit protein eS1 (212 aa).

Belongs to the eukaryotic ribosomal protein eS1 family.

The protein is Small ribosomal subunit protein eS1 of Staphylothermus marinus (strain ATCC 43588 / DSM 3639 / JCM 9404 / F1).